The following is a 333-amino-acid chain: MKNLRNRSFLTLLDFSRQEVEFLLTLSEDLKRAKYIGTEKPMLKNKNIALLFEKDSTRTRCAFEVAAHDQGAHVTYLGPTGSQMGKKETAKDTARVLGGMYDGIEYRGFSQRTVETLAQYSGVPVWNGLTDEDHPTQVLADFLTAKEVLKKEYADINFTYVGDGRNNVANALMQGAAIMGMNFHLVCPKELNPTEELLNRCERIATENGGNILITDDIDKGVKDSDVIYTDVWVSMGEPDEVWQERLKLLKPYQVNQALLEKTGNPNVIFEHCLPSFHNAETKIGQQIYEKYGISEMEVTDDVFESKASVVFQEAENRMHTIKAVMVATLGEF.

Carbamoyl phosphate-binding positions include 56–59, Gln-83, Arg-107, and 134–137; these read STRT and HPTQ. Residues Asn-167, Asp-231, and 235–236 contribute to the L-ornithine site; that span reads SM. Residues 273-274 and Arg-318 contribute to the carbamoyl phosphate site; that span reads CL.

The protein belongs to the aspartate/ornithine carbamoyltransferase superfamily. OTCase family.

Its subcellular location is the cytoplasm. The enzyme catalyses carbamoyl phosphate + L-ornithine = L-citrulline + phosphate + H(+). It functions in the pathway amino-acid biosynthesis; L-arginine biosynthesis; L-arginine from L-ornithine and carbamoyl phosphate: step 1/3. In terms of biological role, has vitronectin and fibronectin-binding activity. Its function is as follows. Reversibly catalyzes the transfer of the carbamoyl group from carbamoyl phosphate (CP) to the N(epsilon) atom of ornithine (ORN) to produce L-citrulline. This Staphylococcus epidermidis (strain ATCC 12228 / FDA PCI 1200) protein is Ornithine carbamoyltransferase (argF).